The primary structure comprises 158 residues: Protein NrdI (158 aa).

Belongs to the NrdI family.

Functionally, probably involved in ribonucleotide reductase function. The chain is Protein NrdI from Rhodococcus jostii (strain RHA1).